Consider the following 222-residue polypeptide: ATP synthase F(0) complex subunit a (222 aa).

6 helical membrane passes run 8–28, 64–84, 93–113, 127–147, 160–180, and 197–219; these read FFYV…ILLP, WSLM…LGLL, QLTV…VPGF, QGTP…SLLI, ITAG…LSSI, and ILEL…LYLH.

The protein belongs to the ATPase A chain family. In terms of assembly, component of the ATP synthase complex composed at least of ATP5F1A/subunit alpha, ATP5F1B/subunit beta, ATP5MC1/subunit c (homooctomer), MT-ATP6/subunit a, MT-ATP8/subunit 8, ATP5ME/subunit e, ATP5MF/subunit f, ATP5MG/subunit g, ATP5MK/subunit k, ATP5MJ/subunit j, ATP5F1C/subunit gamma, ATP5F1D/subunit delta, ATP5F1E/subunit epsilon, ATP5PF/subunit F6, ATP5PB/subunit b, ATP5PD/subunit d, ATP5PO/subunit OSCP. ATP synthase complex consists of a soluble F(1) head domain (subunits alpha(3) and beta(3)) - the catalytic core - and a membrane F(0) domain - the membrane proton channel (subunits c, a, 8, e, f, g, k and j). These two domains are linked by a central stalk (subunits gamma, delta, and epsilon) rotating inside the F1 region and a stationary peripheral stalk (subunits F6, b, d, and OSCP). Interacts with DNAJC30; interaction is direct.

Its subcellular location is the mitochondrion inner membrane. The enzyme catalyses H(+)(in) = H(+)(out). In terms of biological role, subunit a, of the mitochondrial membrane ATP synthase complex (F(1)F(0) ATP synthase or Complex V) that produces ATP from ADP in the presence of a proton gradient across the membrane which is generated by electron transport complexes of the respiratory chain. ATP synthase complex consist of a soluble F(1) head domain - the catalytic core - and a membrane F(1) domain - the membrane proton channel. These two domains are linked by a central stalk rotating inside the F(1) region and a stationary peripheral stalk. During catalysis, ATP synthesis in the catalytic domain of F(1) is coupled via a rotary mechanism of the central stalk subunits to proton translocation. With the subunit c (ATP5MC1), forms the proton-conducting channel in the F(0) domain, that contains two crucial half-channels (inlet and outlet) that facilitate proton movement from the mitochondrial intermembrane space (IMS) into the matrix. Protons are taken up via the inlet half-channel and released through the outlet half-channel, following a Grotthuss mechanism. In Loxodonta africana (African elephant), this protein is ATP synthase F(0) complex subunit a.